Here is a 426-residue protein sequence, read N- to C-terminus: GTPase Obg (426 aa).

Residues 1–158 (MFVDQVSVYV…RNIKVELKLI (158 aa)) form the Obg domain. 2 disordered regions span residues 66–86 (GKRG…DPLV) and 119–146 (GGRG…GEPG). Residues 159-329 (ADVGLVGFPS…LLFAIADKLE (171 aa)) form the OBG-type G domain. GTP contacts are provided by residues 165-172 (GFPSVGKS), 190-194 (FTTLS), 212-215 (DLPG), 282-285 (NKMD), and 310-312 (SAL). Mg(2+)-binding residues include Ser-172 and Thr-192. The region spanning 348 to 426 (RYQKEEDPFH…LLEYEFEFIE (79 aa)) is the OCT domain.

Belongs to the TRAFAC class OBG-HflX-like GTPase superfamily. OBG GTPase family. As to quaternary structure, monomer. It depends on Mg(2+) as a cofactor.

The protein localises to the cytoplasm. An essential GTPase which binds GTP, GDP and possibly (p)ppGpp with moderate affinity, with high nucleotide exchange rates and a fairly low GTP hydrolysis rate. Plays a role in control of the cell cycle, stress response, ribosome biogenesis and in those bacteria that undergo differentiation, in morphogenesis control. The sequence is that of GTPase Obg from Oceanobacillus iheyensis (strain DSM 14371 / CIP 107618 / JCM 11309 / KCTC 3954 / HTE831).